Consider the following 800-residue polypeptide: Heterogeneous nuclear ribonucleoprotein U (800 aa).

Ser-2 is subject to N-acetylserine. Residue Ser-4 is modified to Phosphoserine. One can recognise an SAP domain in the interval 8-42; sequence VKKLKVSELKEELKKRRLSDKGLKADLMDRLQAAL. Lys-17 and Lys-21 each carry N6-acetyllysine. A disordered region spans residues 41 to 257; that stretch reads ALDNEAGGRP…PQPPVEEEDE (217 aa). Ser-58 carries the phosphoserine modification. Low complexity-rich tracts occupy residues 71 to 80 and 103 to 113; these read AGLEQEAAAG and ENGAAGAADAG. 2 stretches are compositionally biased toward acidic residues: residues 114–128 and 134–147; these read AMEE…ENGD and EGED…EGAG. The segment covering 153 to 173 has biased composition (low complexity); the sequence is GEQQSQPPAAAAQQQPSQQRG. An N6-acetyllysine modification is found at Lys-181. At Ser-182 the chain carries ADP-ribosylserine. The span at 194 to 205 shows a compositional bias: low complexity; sequence APPGARQGQQQA. Residues 209 to 242 are compositionally biased toward basic and acidic residues; sequence GKTEQKGGDKKRGVKRPREDHGRGYFEYIEENKY. Arg-231 bears the Citrulline mark. Lys-241 carries the post-translational modification N6-acetyllysine; alternate. Lys-241 is covalently cross-linked (Glycyl lysine isopeptide (Lys-Gly) (interchain with G-Cter in SUMO1); alternate). Residue Lys-241 forms a Glycyl lysine isopeptide (Lys-Gly) (interchain with G-Cter in SUMO2); alternate linkage. Tyr-242 is modified (phosphotyrosine). Ser-243 and Ser-247 each carry phosphoserine. Residues 244–440 enclose the B30.2/SPRY domain; it reads RAKSPQPPVE…VEFNFGQKEK (197 aa). Residue Thr-262 is modified to Phosphothreonine. Lys-328 is modified (N6-acetyllysine). The tract at residues 464-648 is ATPase domain; sequence PKGPEEKKDC…QKLLEQYKEE (185 aa). Lys-471 is covalently cross-linked (Glycyl lysine isopeptide (Lys-Gly) (interchain with G-Cter in SUMO2)). 480–487 provides a ligand contact to ATP; sequence GLPGAGKT. Residues Lys-492 and Lys-500 each carry the N6-acetyllysine; alternate modification. Glycyl lysine isopeptide (Lys-Gly) (interchain with G-Cter in SUMO2); alternate cross-links involve residues Lys-492 and Lys-500. A Phosphothreonine modification is found at Thr-508. Lys-512 is covalently cross-linked (Glycyl lysine isopeptide (Lys-Gly) (interchain with G-Cter in SUMO2)). The residue at position 527 (Lys-527) is an N6-acetyllysine. The residue at position 541 (Lys-541) is an N6-acetyllysine; alternate. A Glycyl lysine isopeptide (Lys-Gly) (interchain with G-Cter in SUMO2); alternate cross-link involves residue Lys-541. Lys-550 is covalently cross-linked (Glycyl lysine isopeptide (Lys-Gly) (interchain with G-Cter in SUMO2)). Thr-558 bears the Phosphothreonine mark. Residues Lys-585 and Lys-602 each participate in a glycyl lysine isopeptide (Lys-Gly) (interchain with G-Cter in SUMO2) cross-link. An actin-binding region spans residues 587–602; sequence EDYKQRTQKKAEVEGK. The residue at position 611 (Lys-611) is an N6-acetyllysine; alternate. Lys-611 participates in a covalent cross-link: Glycyl lysine isopeptide (Lys-Gly) (interchain with G-Cter in SUMO2); alternate. Residues 626-653 are a coiled coil; sequence DEITYVELQKEEAQKLLEQYKEESKKAL. Residues Lys-640 and Lys-646 each participate in a glycyl lysine isopeptide (Lys-Gly) (interchain with G-Cter in SUMO2) cross-link. Residues 647-659 are compositionally biased toward basic and acidic residues; it reads EESKKALPPEKKQ. Positions 647–729 are disordered; the sequence is EESKKALPPE…GSGGIGYPYP (83 aa). At Arg-678 the chain carries Omega-N-methylarginine. A compositionally biased stretch (gly residues) spans 686 to 704; sequence GGFNMRGGNFRGGAPGNRG. Residues 690–715 form an RNA-binding RGG-box region; sequence MRGGNFRGGAPGNRGGYNRRGNMPQR. 3 positions are modified to asymmetric dimethylarginine: Arg-691, Arg-696, and Arg-703. Asymmetric dimethylarginine; alternate is present on residues Arg-709 and Arg-715. Omega-N-methylarginine; alternate is present on residues Arg-709 and Arg-715. Over residues 715-725 the composition is skewed to gly residues; the sequence is RGGGGGSGGIG. An asymmetric dimethylarginine mark is found at Arg-730 and Arg-737. The interval 745-774 is disordered; sequence NYNRGGMPNRGNYNQNFRGRGNNRGYKNQS. Lys-789 carries the post-translational modification N6-acetyllysine; alternate. A Glycyl lysine isopeptide (Lys-Gly) (interchain with G-Cter in SUMO2); alternate cross-link involves residue Lys-789.

Oligomer (via ATPase domain and RNA-binding RGG-box region); oligomerization occurs upon ATP-binding in a chromatin-associated RNAs (caRNAs)- and transcription-dependent manner and is required for chromatin decompaction. ATP hydrolysis is required to cycle from an oligomeric to monomeric state to compact chromatin. Component of the coding region determinant (CRD)-mediated complex, composed of DHX9, HNRNPU, IGF2BP1, SYNCRIP and YBX1. Identified in the spliceosome C complex. Identified in a IGF2BP1-dependent mRNP granule complex containing untranslated mRNAs. Associates with heterogeneous nuclear ribonucleoprotein (hnRNP) particles. Associates (via middle region) with the C-terminal domain (CTD) RNA polymerase II (Pol II) holoenzyme; this association occurs in a RNA-independent manner. Associates (via middle region) with the core-TFIIH basal transcription factor complex; this association inhibits the CTD phosphorylation of RNA polymerase II holoenzyme by down-regulating TFIIH kinase activity. Associates with the telomerase holoenzyme complex. Associates with spindle microtubules (MTs) in a TPX2-dependent manner. Interacts (via C-terminus) with actin; this interaction is direct and mediates association with the phosphorylated CTD of RNA polymerase II and is disrupted in presence of the long non-coding H19 RNA. Interacts with AURKA. Interacts (via C-terminus) with CBX5; this interaction is, at least in part, RNA-dependent. Interacts with CR2. Interacts with CRY1. Interacts (via C-terminus) with EP300; this interaction enhances DNA-binding to nuclear scaffold/matrix attachment region (S/MAR) elements. Interacts with ERBB4. Interacts with GEMIN5. Interacts with IGF2BP1. Interacts with IGF2BP2 and IGF2BP3. Interacts with NCL; this interaction occurs during mitosis. Interacts (via C-terminus) with NR3C1 (via C-terminus). Interacts with PLK1; this interaction induces phosphorylation of HNRNPU at Ser-58 in mitosis. Interacts with POU3F4. Interacts with SMARCA4; this interaction occurs in embryonic stem cells and stimulates global Pol II-mediated transcription. Interacts (via C-terminus) with TOP2A; this interaction protects the topoisomerase TOP2A from degradation and positively regulates the relaxation of supercoiled DNA by TOP2A in a RNA-dependent manner. Interacts with TPX2; this interaction recruits HNRNPU to spindle microtubules (MTs). Interacts with UBQLN2. Interacts (via RNA-binding RGG-box region) with ZBTB7B; the interaction facilitates the recruitment of long non-coding RNA Blnc1 by ZBTB7B. Interacts with ERCC6. Post-translationally, cleaved at Asp-94 by CASP3 during T-cell apoptosis, resulting in a loss of DNA- and chromatin-binding activities. Extensively phosphorylated. Phosphorylated on Ser-58 by PLK1 and dephosphorylated by protein phosphatase 2A (PP2A) in mitosis. In terms of processing, arg-709 and Arg-715 are dimethylated, probably to asymmetric dimethylarginine. Post-translationally, citrullinated by PADI4.

The protein localises to the nucleus. It is found in the nucleus matrix. It localises to the chromosome. Its subcellular location is the nucleus speckle. The protein resides in the cytoplasm. The protein localises to the cytoskeleton. It is found in the microtubule organizing center. It localises to the centrosome. Its subcellular location is the centromere. The protein resides in the kinetochore. The protein localises to the spindle. It is found in the spindle pole. It localises to the midbody. Its subcellular location is the cell surface. The protein resides in the cytoplasmic granule. DNA- and RNA-binding protein involved in several cellular processes such as nuclear chromatin organization, telomere-length regulation, transcription, mRNA alternative splicing and stability, Xist-mediated transcriptional silencing and mitotic cell progression. Plays a role in the regulation of interphase large-scale gene-rich chromatin organization through chromatin-associated RNAs (caRNAs) in a transcription-dependent manner, and thereby maintains genomic stability. Required for the localization of the long non-coding Xist RNA on the inactive chromosome X (Xi) and the subsequent initiation and maintenance of X-linked transcriptional gene silencing during X-inactivation. Plays a role as a RNA polymerase II (Pol II) holoenzyme transcription regulator. Promotes transcription initiation by direct association with the core-TFIIH basal transcription factor complex for the assembly of a functional pre-initiation complex with Pol II in a actin-dependent manner. Blocks Pol II transcription elongation activity by inhibiting the C-terminal domain (CTD) phosphorylation of Pol II and dissociates from Pol II pre-initiation complex prior to productive transcription elongation. Positively regulates CBX5-induced transcriptional gene silencing and retention of CBX5 in the nucleus. Negatively regulates glucocorticoid-mediated transcriptional activation. Key regulator of transcription initiation and elongation in embryonic stem cells upon leukemia inhibitory factor (LIF) signaling. Involved in the long non-coding RNA H19-mediated Pol II transcriptional repression. Participates in the circadian regulation of the core clock component BMAL1 transcription. Plays a role in the regulation of telomere length. Plays a role as a global pre-mRNA alternative splicing modulator by regulating U2 small nuclear ribonucleoprotein (snRNP) biogenesis. Plays a role in mRNA stability. Component of the CRD-mediated complex that promotes MYC mRNA stabilization. Enhances the expression of specific genes, such as tumor necrosis factor TNFA, by regulating mRNA stability, possibly through binding to the 3'-untranslated region (UTR). Plays a role in mitotic cell cycle regulation. Involved in the formation of stable mitotic spindle microtubules (MTs) attachment to kinetochore, spindle organization and chromosome congression. Phosphorylation at Ser-58 by PLK1 is required for chromosome alignement and segregation and progression through mitosis. Also contributes to the targeting of AURKA to mitotic spindle MTs. Binds to double- and single-stranded DNA and RNA, poly(A), poly(C) and poly(G) oligoribonucleotides. Binds to chromatin-associated RNAs (caRNAs). Associates with chromatin to scaffold/matrix attachment region (S/MAR) elements in a chromatin-associated RNAs (caRNAs)-dependent manner. Binds (via RNA-binding RGG-box region) to the long non-coding Xist RNA; this binding is direct and bridges the Xist RNA and the inactive chromosome X (Xi). Binds the long non-coding H19 RNA. Binds to SMN1/2 pre-mRNAs at G/U-rich regions. Binds to small nuclear RNAs (snRNAs). Binds to the 3'-UTR of TNFA mRNA. Also negatively regulates embryonic stem cell differentiation upon LIF signaling. Required for embryonic development. Binds to brown fat long non-coding RNA 1 (Blnc1); facilitates the recruitment of Blnc1 by ZBTB7B required to drive brown and beige fat development and thermogenesis. This chain is Heterogeneous nuclear ribonucleoprotein U, found in Mus musculus (Mouse).